The following is a 259-amino-acid chain: Probable ABC transporter permease protein RP096 (259 aa).

5 consecutive transmembrane segments (helical) span residues 13–35 (TIKF…SSII), 49–69 (LFIG…SGAV), 148–168 (VIAA…IGVM), 195–215 (PIDV…ISII), and 237–257 (AVVN…ELFF).

Belongs to the MlaE permease family.

The protein resides in the cell inner membrane. Could be part of an ABC transporter complex. The polypeptide is Probable ABC transporter permease protein RP096 (Rickettsia prowazekii (strain Madrid E)).